We begin with the raw amino-acid sequence, 330 residues long: Cathepsin K (330 aa).

The N-terminal stretch at Met1–Ala16 is a signal peptide. A propeptide spans Leu17–Arg115 (activation peptide). The N-linked (GlcNAc...) asparagine glycan is linked to Asn104. 3 cysteine pairs are disulfide-bonded: Cys137-Cys178, Cys171-Cys211, and Cys270-Cys319. Cys140 is a catalytic residue. Residues His277 and Asn297 contribute to the active site.

This sequence belongs to the peptidase C1 family. In terms of tissue distribution, expressed in the thyroid epithelial cells.

The protein localises to the lysosome. The protein resides in the secreted. Its subcellular location is the apical cell membrane. The enzyme catalyses Broad proteolytic activity. With small-molecule substrates and inhibitors, the major determinant of specificity is P2, which is preferably Leu, Met &gt; Phe, and not Arg.. Functionally, thiol protease involved in osteoclastic bone resorption and may participate partially in the disorder of bone remodeling. Displays potent endoprotease activity against fibrinogen at acid pH. May play an important role in extracellular matrix degradation. Involved in the release of thyroid hormone thyroxine (T4) by limited proteolysis of TG/thyroglobulin in the thyroid follicle lumen. This chain is Cathepsin K (CTSK), found in Sus scrofa (Pig).